The primary structure comprises 161 residues: QSEPAGPPQPYTFSYDNTDEYGTRIAQEETGDENNNKVGSYSYTDPNGISRTVKYVADAEGFRVTVETNEPGTKTSNPADAQIVSNAATDSYSPSPASSPAKPPSLAVNAAPITIHAVHASPVVHAIHAAPVSYATAHHVTPVIALSHAPLTYTLGRAKSA.

The residue at position 1 (Gln1) is a Pyrrolidone carboxylic acid. Pro residues predominate over residues 1-10 (QSEPAGPPQP). 2 disordered regions span residues 1-44 (QSEP…YSYT) and 67-103 (ETNEPGTKTSNPADAQIVSNAATDSYSPSPASSPAKP). The Chitin-binding type R&amp;R domain occupies 8-74 (PQPYTFSYDN…TVETNEPGTK (67 aa)). The span at 67 to 86 (ETNEPGTKTSNPADAQIVSN) shows a compositional bias: polar residues. Residues 87-103 (AATDSYSPSPASSPAKP) are compositionally biased toward low complexity.

In terms of biological role, component of the cuticle of the tick. Binds chitin. The protein is Cuticle protein 16.8 of Ixodes ricinus (Common tick).